The primary structure comprises 426 residues: MSAPLADIDPDIAGLLGQELGRQRDTLEMIASENFVPRAVLQAQGSVLTNKYAEGLPGRRYYGGCEYVDVVENIARDRAKALFGADFANVQPHSGAQANAAVLHALMTPGERLLGLDLANGGHLTHGMKLNFSGKLYDVGFYGVDPTTHLIDMDAVRAKALEFRPKVIIAGWSAYPRVLDFAAFASIADEVGAKLWVDMAHFAGLVAAGLHPSPVPHADVVSTTVHKTLGGPRSGLILGKQEYAKSINSAVFPGQQGGPLMHVIAAKAVALKIAGTEEFADRQRRTLSGARILAERLSGADVAAAGVSVVSGGTDVHLVLVDLRNSELDGQAAEDLLHEIGITVNRNAVPNDPRPPMVTSGLRVGTPALATRGFGDAEFSEVADVIATALAGGRGADLAALRDRVTRLARDFPLYEGLEDWALVGR.

(6S)-5,6,7,8-tetrahydrofolate-binding positions include L118 and 122–124 (GHL). K227 is modified (N6-(pyridoxal phosphate)lysine).

Belongs to the SHMT family. As to quaternary structure, homodimer. Pyridoxal 5'-phosphate serves as cofactor.

It is found in the cytoplasm. It carries out the reaction (6R)-5,10-methylene-5,6,7,8-tetrahydrofolate + glycine + H2O = (6S)-5,6,7,8-tetrahydrofolate + L-serine. Its pathway is one-carbon metabolism; tetrahydrofolate interconversion. It functions in the pathway amino-acid biosynthesis; glycine biosynthesis; glycine from L-serine: step 1/1. Functionally, catalyzes the reversible interconversion of serine and glycine with tetrahydrofolate (THF) serving as the one-carbon carrier. This reaction serves as the major source of one-carbon groups required for the biosynthesis of purines, thymidylate, methionine, and other important biomolecules. Also exhibits THF-independent aldolase activity toward beta-hydroxyamino acids, producing glycine and aldehydes, via a retro-aldol mechanism. This chain is Serine hydroxymethyltransferase, found in Mycobacterium avium (strain 104).